Consider the following 295-residue polypeptide: MTDISPLDQARILSEALPHMQQYDEETIVIKYGGHAMGDEETAKNFARDIVLLEQTAINPVVVHGGGPQIATMLKRLGIQSEFAAGLRITDAATIEIVEMVLAGSVNKQIVGYINEAGGKAVGLSGKDANMVKASKTTRTIVDPGSNIEKAIDLGFVGDPEKVDLTLLNQLIGYELIPVLAPLATSKEGQTLNVNADTFAGAVAGALKAKRLLLLTDVPGVLDKSKKLIPQLSVKDARKLIADGTISGGMIPKVETCIYALEQGVEGVVIIDGKMQHAVLLELFTNQGTGTLIHK.

Substrate is bound by residues 66-67 (GG), Arg88, and Asn193.

The protein belongs to the acetylglutamate kinase family. ArgB subfamily.

It localises to the cytoplasm. The enzyme catalyses N-acetyl-L-glutamate + ATP = N-acetyl-L-glutamyl 5-phosphate + ADP. It participates in amino-acid biosynthesis; L-arginine biosynthesis; N(2)-acetyl-L-ornithine from L-glutamate: step 2/4. Functionally, catalyzes the ATP-dependent phosphorylation of N-acetyl-L-glutamate. This is Acetylglutamate kinase from Bradyrhizobium diazoefficiens (strain JCM 10833 / BCRC 13528 / IAM 13628 / NBRC 14792 / USDA 110).